The primary structure comprises 786 residues: DNA double-strand break repair Rad50 ATPase (786 aa).

Residues Lys13, 33–39 (NGSGKTT), and Gln138 contribute to the ATP site. Coiled-coil stretches lie at residues 194 to 249 (LKAE…LKSI), 337 to 455 (EKAK…RALE), and 551 to 650 (ALER…VKAL). The Zinc-hook domain maps to 366-459 (EIAELQNKIN…KIRALEKYKG (94 aa)). 2 residues coordinate Zn(2+): Cys411 and Cys414.

Belongs to the SMC family. RAD50 subfamily. As to quaternary structure, homodimer. Forms a heterotetramer composed of two Mre11 subunits and two Rad50 subunits. Requires Zn(2+) as cofactor.

In terms of biological role, part of the Rad50/Mre11 complex, which is involved in the early steps of DNA double-strand break (DSB) repair. The complex may facilitate opening of the processed DNA ends to aid in the recruitment of HerA and NurA. Rad50 controls the balance between DNA end bridging and DNA resection via ATP-dependent structural rearrangements of the Rad50/Mre11 complex. The sequence is that of DNA double-strand break repair Rad50 ATPase from Nanoarchaeum equitans (strain Kin4-M).